Here is a 126-residue protein sequence, read N- to C-terminus: Small ribosomal subunit protein uS8 (126 aa).

It belongs to the universal ribosomal protein uS8 family. As to quaternary structure, part of the 30S ribosomal subunit. Contacts proteins S5 and S12.

One of the primary rRNA binding proteins, it binds directly to 16S rRNA central domain where it helps coordinate assembly of the platform of the 30S subunit. In Nitratidesulfovibrio vulgaris (strain ATCC 29579 / DSM 644 / CCUG 34227 / NCIMB 8303 / VKM B-1760 / Hildenborough) (Desulfovibrio vulgaris), this protein is Small ribosomal subunit protein uS8.